The primary structure comprises 234 residues: AA9 family lytic polysaccharide monooxygenase D (234 aa).

The first 18 residues, 1 to 18 (MRIEKLLNAALLAGAVSA), serve as a signal peptide directing secretion. Positions 19 and 95 each coordinate Cu(2+). Residues cysteine 57 and cysteine 182 are joined by a disulfide bond. O2 contacts are provided by histidine 168 and glutamine 177. Tyrosine 179 provides a ligand contact to Cu(2+).

It belongs to the polysaccharide monooxygenase AA9 family. It depends on Cu(2+) as a cofactor.

The protein localises to the secreted. The enzyme catalyses [(1-&gt;4)-beta-D-glucosyl]n+m + reduced acceptor + O2 = 4-dehydro-beta-D-glucosyl-[(1-&gt;4)-beta-D-glucosyl]n-1 + [(1-&gt;4)-beta-D-glucosyl]m + acceptor + H2O.. Lytic polysaccharide monooxygenase (LPMO) that depolymerizes crystalline and amorphous polysaccharides via the oxidation of scissile alpha- or beta-(1-4)-glycosidic bonds, yielding C1 or C4 oxidation products. Catalysis by LPMOs requires the reduction of the active-site copper from Cu(II) to Cu(I) by a reducing agent and H(2)O(2) or O(2) as a cosubstrate. In Malbranchea cinnamomea (Thermophilic fungus), this protein is AA9 family lytic polysaccharide monooxygenase D.